We begin with the raw amino-acid sequence, 545 residues long: ATP synthase subunit alpha (545 aa).

173 to 180 serves as a coordination point for ATP; the sequence is GDRQTGKT.

It belongs to the ATPase alpha/beta chains family. F-type ATPases have 2 components, CF(1) - the catalytic core - and CF(0) - the membrane proton channel. CF(1) has five subunits: alpha(3), beta(3), gamma(1), delta(1), epsilon(1). CF(0) has three main subunits: a(1), b(2) and c(9-12). The alpha and beta chains form an alternating ring which encloses part of the gamma chain. CF(1) is attached to CF(0) by a central stalk formed by the gamma and epsilon chains, while a peripheral stalk is formed by the delta and b chains.

The protein resides in the cell membrane. The catalysed reaction is ATP + H2O + 4 H(+)(in) = ADP + phosphate + 5 H(+)(out). Its function is as follows. Produces ATP from ADP in the presence of a proton gradient across the membrane. The alpha chain is a regulatory subunit. In Clavibacter sepedonicus (Clavibacter michiganensis subsp. sepedonicus), this protein is ATP synthase subunit alpha.